Here is a 115-residue protein sequence, read N- to C-terminus: Large ribosomal subunit protein bL19 (115 aa).

It belongs to the bacterial ribosomal protein bL19 family.

In terms of biological role, this protein is located at the 30S-50S ribosomal subunit interface and may play a role in the structure and function of the aminoacyl-tRNA binding site. The protein is Large ribosomal subunit protein bL19 of Fervidobacterium nodosum (strain ATCC 35602 / DSM 5306 / Rt17-B1).